Here is a 4042-residue protein sequence, read N- to C-terminus: Polyketide synthase-nonribosomal peptide synthetase phmA (4042 aa).

Residues 10–411 form the Ketosynthase family 3 (KS3) domain; sequence NEPIAIVGSA…GANAHAILEA (402 aa). An acyl transferase region spans residues 519–837; the sequence is VFTGQGAQWA…TGLLSRDRDD (319 aa). The segment at 909 to 1042 is N-terminal hotdog fold; that stretch reads HELLGTKCPD…GRISALFGPP (134 aa). Residues 909–1208 form a dehydratase (DH) domain region; the sequence is HELLGTKCPD…LHTKPLGHAT (300 aa). The PKS/mFAS DH domain maps to 909-1210; it reads HELLGTKCPD…TKPLGHATPE (302 aa). Catalysis depends on His941, which acts as the Proton acceptor; for dehydratase activity. Positions 1057 to 1210 are C-terminal hotdog fold; that stretch reads MIDVDPEQFY…TKPLGHATPE (154 aa). Catalysis depends on Asp1117, which acts as the Proton donor; for dehydratase activity. Residues 1349 to 1572 form a methyltransferase (MT) domain region; it reads DDMLNDFYVK…VDEHVEFIRN (224 aa). Positions 2073–2246 are ketoreductase (KR)domain; that stretch reads TYWLVGLTGG…AGSVINIGAI (174 aa). The 83-residue stretch at 2351 to 2433 folds into the Carrier 1 domain; that stretch reads ATTADEVNEA…ELVSAAQEQL (83 aa). Ser2393 carries the O-(pantetheine 4'-phosphoryl)serine modification. Disordered regions lie at residues 2460-2504 and 2535-2554; these read KTET…SKDA and ATRSKTSSSSSSFTSDPEND. Positions 2479-2490 are enriched in acidic residues; the sequence is EVDEEEQEEDEA. Positions 2495 to 2504 are enriched in polar residues; it reads NFFSSASKDA. Positions 2536–2549 are enriched in low complexity; sequence TRSKTSSSSSSFTS. The interval 2584–3019 is condensation; that stretch reads RVSPMSFGQA…LGRPPLYDPQ (436 aa). The tract at residues 3047-3443 is adenylation; that stretch reads EMASRFGSQI…TADGLVLEGR (397 aa). The 81-residue stretch at 3562–3642 folds into the Carrier 2 domain; it reads KENKSPESEL…AMLNLISPAS (81 aa). Ser3602 is modified (O-(pantetheine 4'-phosphoryl)serine). Residues 3703 to 3924 are reductase-like; it reads ITGASGFLGK…DFVSVESVAH (222 aa).

It belongs to the NRP synthetase family.

The protein operates within mycotoxin biosynthesis. Its function is as follows. Hybrid PKS-NRPS synthetase; part of the gene cluster that mediates the biosynthesis of the mycotoxins phomacins, leucine-derived cytochalasans with potent actin polymerization-inhibitory activities and monocot-specific antigerminative activities. The first step in the pathway is catalyzed by the hybrid PKS-NRPS phmA, assisted by the enoyl reductase phmE, that are responsible for fusion of the leucine precursor and the polyketide backbone to produce a 2-pyrrolidone intermediate. The polyketide synthase module (PKS) of phmA is responsible for the synthesis of the polyketide backbone and the downstream nonribosomal peptide synthetase (NRPS) amidates the carboxyl end of the polyketide with the leucine precursor. Because phmA lacks a designated enoylreductase (ER) domain, the required activity is provided the enoyl reductase phmE. Reduction by the hydrolyase phmG, followed by dehydration and intra-molecular Diels-Alder cyclization by the Diels-Alderase phmD then yield the required isoindolone-fused macrocycle. A number of oxidative steps catalyzed by the tailoring cytochrome P450 monooxygenase phmB, the FAD-linked oxidoreductase phmC and the short-chain dehydrogenase/reductase phmF, are further required to afford the final products, phomacin D and phomacin E. The protein is Polyketide synthase-nonribosomal peptide synthetase phmA of Phaeosphaeria nodorum (strain SN15 / ATCC MYA-4574 / FGSC 10173) (Glume blotch fungus).